Here is a 300-residue protein sequence, read N- to C-terminus: Fructose-bisphosphate aldolase class 1 (300 aa).

Glutamate 181 (proton acceptor) is an active-site residue. The Schiff-base intermediate with dihydroxyacetone-P role is filled by lysine 218.

Belongs to the class I fructose-bisphosphate aldolase family.

It catalyses the reaction beta-D-fructose 1,6-bisphosphate = D-glyceraldehyde 3-phosphate + dihydroxyacetone phosphate. It functions in the pathway carbohydrate degradation; glycolysis; D-glyceraldehyde 3-phosphate and glycerone phosphate from D-glucose: step 4/4. The sequence is that of Fructose-bisphosphate aldolase class 1 (fda) from Synechocystis sp. (strain ATCC 27184 / PCC 6803 / Kazusa).